The following is a 321-amino-acid chain: MESNGVPMITLSSGIRMPALGMGTVETMEKGTEREKLAFLKAIEVGYRHFDTAAAYQTEECLGEAIAEALQLGLIKSRDELFITSKLWCADAHADLVLPALQNSLRNLKLDYLDLYLIHHPVSLKPGKFVNEIPKDHILPMDYKSVWAAMEECQTLGFTRAIGVCNFSCKKLQELMATANSPPVVNQVEMSPTLHQKNLREYCKANNIMITAHSVLGAVGAAWGTKAVMHSKVLHQIAVARGKSVAQVSMRWVYQQGASLVVKSFNEARMKENLKIFDWELTAEDMEKISEIPQSRTSSAAFLLSPTGPFKTEEEFWDEKD.

Residues threonine 27 and aspartate 51 each contribute to the NADPH site. Residues tyrosine 56 and histidine 119 each act as proton donor in the active site. Residue histidine 119 participates in substrate binding. 5 residues coordinate NADPH: glutamine 187, serine 214, leucine 216, serine 264, and arginine 269.

Belongs to the aldo/keto reductase family. As to expression, latex secreting cells (laticifer cells). Expressed constitutively and ubiquitously with highest levels in capsules.

The protein localises to the cytoplasm. Its subcellular location is the cytosol. The enzyme catalyses codeine + NADP(+) = codeinone + NADPH + H(+). It catalyses the reaction neopine + NADP(+) = neopinone + NADPH + H(+). The catalysed reaction is morphine + NADP(+) = morphinone + NADPH + H(+). It carries out the reaction neomorphine + NADP(+) = neomorphinone + NADPH + H(+). Its pathway is alkaloid biosynthesis; morphine biosynthesis. Its function is as follows. NADPH-dependent codeinone reductase involved in biosynthesis of morphinan-type benzylisoquinoline and opiate alkaloids natural products. Reduces codeinone to codeine in the penultimate step in morphine biosynthesis. Can use morphinone, hydrocodone and hydromorphone as substrate during reductive reaction with NADPH as cofactor, and morphine and dihydrocodeine as substrate during oxidative reaction with NADP as cofactor. Converts morphinone to morphine, and neomorphinone to neomorphine. Reduces irreversibly neopinone, a spontaneous isomer of codeinone, to neopine; in planta, neopine levels are limited to low levels. This chain is NADPH-dependent codeinone reductase 1-5, found in Papaver somniferum (Opium poppy).